The chain runs to 440 residues: Ribosomal protein uS12 methylthiotransferase RimO (440 aa).

The 111-residue stretch at 6 to 116 folds into the MTTase N-terminal domain; that stretch reads PKVGFVSLGC…VVTAVHEVVP (111 aa). [4Fe-4S] cluster contacts are provided by Cys15, Cys51, Cys80, Cys149, Cys153, and Cys156. One can recognise a Radical SAM core domain in the interval 135 to 373; sequence LTPRHYAYLK…MAHQQAISAA (239 aa). Positions 376–440 constitute a TRAM domain; it reads QLKVGKEIEV…DEYDLWAEPV (65 aa).

This sequence belongs to the methylthiotransferase family. RimO subfamily. [4Fe-4S] cluster serves as cofactor.

The protein localises to the cytoplasm. The catalysed reaction is L-aspartate(89)-[ribosomal protein uS12]-hydrogen + (sulfur carrier)-SH + AH2 + 2 S-adenosyl-L-methionine = 3-methylsulfanyl-L-aspartate(89)-[ribosomal protein uS12]-hydrogen + (sulfur carrier)-H + 5'-deoxyadenosine + L-methionine + A + S-adenosyl-L-homocysteine + 2 H(+). Catalyzes the methylthiolation of an aspartic acid residue of ribosomal protein uS12. This is Ribosomal protein uS12 methylthiotransferase RimO from Pseudomonas paraeruginosa (strain DSM 24068 / PA7) (Pseudomonas aeruginosa (strain PA7)).